A 127-amino-acid polypeptide reads, in one-letter code: MPTINQLIRQPRVSARVKSKSPALENSPQKRGVCTRVYTTTPKKPNSALRKVAKVRLTNGFEVISYIGGEGHNLQEHSVVLLRGGRVKDLPGVRYHMVRGALDTQGVKDRKQARSKYGTKRAKAGKK.

A 3-methylthioaspartic acid modification is found at Asp89. The tract at residues 104–127 (TQGVKDRKQARSKYGTKRAKAGKK) is disordered. The segment covering 113–127 (ARSKYGTKRAKAGKK) has biased composition (basic residues).

This sequence belongs to the universal ribosomal protein uS12 family. Part of the 30S ribosomal subunit. Contacts proteins S8 and S17. May interact with IF1 in the 30S initiation complex.

With S4 and S5 plays an important role in translational accuracy. Functionally, interacts with and stabilizes bases of the 16S rRNA that are involved in tRNA selection in the A site and with the mRNA backbone. Located at the interface of the 30S and 50S subunits, it traverses the body of the 30S subunit contacting proteins on the other side and probably holding the rRNA structure together. The combined cluster of proteins S8, S12 and S17 appears to hold together the shoulder and platform of the 30S subunit. This is Small ribosomal subunit protein uS12 from Herminiimonas arsenicoxydans.